The primary structure comprises 208 residues: Anthranilate synthase component 2 (208 aa).

Positions 3-208 (HVVLIDNHDS…SRCVEQLLAN (206 aa)) constitute a Glutamine amidotransferase type-1 domain. 53–55 (GPG) provides a ligand contact to L-glutamine. Residue C80 is the Nucleophile; for GATase activity of the active site. L-glutamine-binding positions include Q84 and 145-146 (SL). Active-site for GATase activity residues include H185 and E187.

In terms of assembly, heterotetramer consisting of two non-identical subunits: a beta subunit (TrpG) and a large alpha subunit (TrpE).

The enzyme catalyses chorismate + L-glutamine = anthranilate + pyruvate + L-glutamate + H(+). It functions in the pathway amino-acid biosynthesis; L-tryptophan biosynthesis; L-tryptophan from chorismate: step 1/5. In terms of biological role, part of a heterotetrameric complex that catalyzes the two-step biosynthesis of anthranilate, an intermediate in the biosynthesis of L-tryptophan. In the first step, the glutamine-binding beta subunit (TrpG) of anthranilate synthase (AS) provides the glutamine amidotransferase activity which generates ammonia as a substrate that, along with chorismate, is used in the second step, catalyzed by the large alpha subunit of AS (TrpE) to produce anthranilate. In the absence of TrpG, TrpE can synthesize anthranilate directly from chorismate and high concentrations of ammonia. The polypeptide is Anthranilate synthase component 2 (trpG) (Corynebacterium glutamicum (strain ATCC 13032 / DSM 20300 / JCM 1318 / BCRC 11384 / CCUG 27702 / LMG 3730 / NBRC 12168 / NCIMB 10025 / NRRL B-2784 / 534)).